The sequence spans 259 residues: QWGDEGKGKIVDLLTDRVKYVVRYQGGRGAGHTLILNGEKTVLRLIPSGILRDNVTCLIGNGVVLSPAALMQEMSELENRGVNVRDRLLISEACPLILPYHVAMDHAREARWAKRPIRATGRGIGPAYEDKVARRGLRVGDLFDRAAFAEKLKNILDYYNFQLVNYYKVEPVDYQKTLDDVFAVADIITGMVADITTILDTARKNGDNILFEGAQGTMLDIDHGTYPYVTSSNTAGGVASGSGFGPRNLDYVLGIIKAY.

GTP is bound by residues 3-9 (GDEGKGK) and 31-33 (GHT). Catalysis depends on Asp4, which acts as the Proton acceptor. Residues Asp4 and Gly31 each contribute to the Mg(2+) site. 4-7 (DEGK) is an IMP binding site. Catalysis depends on His32, which acts as the Proton donor. Residues Thr120, Arg134, Gln215, and Thr230 each coordinate IMP.

Belongs to the adenylosuccinate synthetase family. In terms of assembly, homodimer. Requires Mg(2+) as cofactor.

It is found in the cytoplasm. The enzyme catalyses IMP + L-aspartate + GTP = N(6)-(1,2-dicarboxyethyl)-AMP + GDP + phosphate + 2 H(+). Its pathway is purine metabolism; AMP biosynthesis via de novo pathway; AMP from IMP: step 1/2. Its function is as follows. Plays an important role in the de novo pathway of purine nucleotide biosynthesis. Catalyzes the first committed step in the biosynthesis of AMP from IMP. The sequence is that of Adenylosuccinate synthetase from Aggregatibacter actinomycetemcomitans (Actinobacillus actinomycetemcomitans).